The chain runs to 207 residues: Thiamine-phosphate synthase (207 aa).

4-amino-2-methyl-5-(diphosphooxymethyl)pyrimidine-binding positions include 35 to 39 (QYRDK) and Asn-67. Asp-68 and Asp-86 together coordinate Mg(2+). 4-amino-2-methyl-5-(diphosphooxymethyl)pyrimidine is bound at residue Thr-105. Position 132-134 (132-134 (SVT)) interacts with 2-[(2R,5Z)-2-carboxy-4-methylthiazol-5(2H)-ylidene]ethyl phosphate. Lys-135 lines the 4-amino-2-methyl-5-(diphosphooxymethyl)pyrimidine pocket. A 2-[(2R,5Z)-2-carboxy-4-methylthiazol-5(2H)-ylidene]ethyl phosphate-binding site is contributed by Gly-162.

Belongs to the thiamine-phosphate synthase family. The cofactor is Mg(2+).

It carries out the reaction 2-[(2R,5Z)-2-carboxy-4-methylthiazol-5(2H)-ylidene]ethyl phosphate + 4-amino-2-methyl-5-(diphosphooxymethyl)pyrimidine + 2 H(+) = thiamine phosphate + CO2 + diphosphate. It catalyses the reaction 2-(2-carboxy-4-methylthiazol-5-yl)ethyl phosphate + 4-amino-2-methyl-5-(diphosphooxymethyl)pyrimidine + 2 H(+) = thiamine phosphate + CO2 + diphosphate. The enzyme catalyses 4-methyl-5-(2-phosphooxyethyl)-thiazole + 4-amino-2-methyl-5-(diphosphooxymethyl)pyrimidine + H(+) = thiamine phosphate + diphosphate. It functions in the pathway cofactor biosynthesis; thiamine diphosphate biosynthesis; thiamine phosphate from 4-amino-2-methyl-5-diphosphomethylpyrimidine and 4-methyl-5-(2-phosphoethyl)-thiazole: step 1/1. Condenses 4-methyl-5-(beta-hydroxyethyl)thiazole monophosphate (THZ-P) and 2-methyl-4-amino-5-hydroxymethyl pyrimidine pyrophosphate (HMP-PP) to form thiamine monophosphate (TMP). This Pseudomonas putida (strain ATCC 47054 / DSM 6125 / CFBP 8728 / NCIMB 11950 / KT2440) protein is Thiamine-phosphate synthase.